A 329-amino-acid polypeptide reads, in one-letter code: Tagatose 1,6-diphosphate aldolase 2 (329 aa).

The protein belongs to the aldolase LacD family.

It carries out the reaction D-tagatofuranose 1,6-bisphosphate = D-glyceraldehyde 3-phosphate + dihydroxyacetone phosphate. Its pathway is carbohydrate metabolism; D-tagatose 6-phosphate degradation; D-glyceraldehyde 3-phosphate and glycerone phosphate from D-tagatose 6-phosphate: step 2/2. In Streptococcus mutans serotype c (strain ATCC 700610 / UA159), this protein is Tagatose 1,6-diphosphate aldolase 2 (lacD2).